A 21-amino-acid polypeptide reads, in one-letter code: Alpha-aminoadipic semialdehyde dehydrogenase (21 aa).

This sequence belongs to the aldehyde dehydrogenase family. Homotetramer.

The enzyme catalyses (S)-2-amino-6-oxohexanoate + NADP(+) + H2O = L-2-aminoadipate + NADPH + 2 H(+). It catalyses the reaction (S)-2-amino-6-oxohexanoate + NAD(+) + H2O = L-2-aminoadipate + NADH + 2 H(+). The sequence is that of Alpha-aminoadipic semialdehyde dehydrogenase (aldh7a1) from Ctenopharyngodon idella (Grass carp).